Reading from the N-terminus, the 89-residue chain is Small ribosomal subunit protein bS18 (89 aa).

The protein belongs to the bacterial ribosomal protein bS18 family. In terms of assembly, part of the 30S ribosomal subunit. Forms a tight heterodimer with protein bS6.

Binds as a heterodimer with protein bS6 to the central domain of the 16S rRNA, where it helps stabilize the platform of the 30S subunit. The chain is Small ribosomal subunit protein bS18 from Bdellovibrio bacteriovorus (strain ATCC 15356 / DSM 50701 / NCIMB 9529 / HD100).